The following is a 101-amino-acid chain: Gamma-secretase subunit PEN-2 (101 aa).

Residues 1 to 17 lie on the Cytoplasmic side of the membrane; sequence MNLERIPNEEKLSLCRR. Positions 18-36 form an intramembrane region, helical; it reads YYLGGFAFLPFLWLVNILW. Over 37 to 57 the chain is Cytoplasmic; the sequence is FFKEAFLKPAYTEQPQIKSYV. A helical membrane pass occupies residues 58–78; sequence KKSALGLLLWVAVLTTWITVF. At 79–101 the chain is on the lumenal side; it reads QHFRAQWGEVGDYLSFTIPLGTA.

It belongs to the PEN-2 family. The functional gamma-secretase complex is composed of at least four polypeptides: a presenilin homodimer (psen1 or psen2), nicastrin (ncstn), aph1 (aph1a or aph1b) and psenen.

It is found in the endoplasmic reticulum membrane. The protein resides in the golgi apparatus. The protein localises to the golgi stack membrane. It localises to the cell membrane. Its subcellular location is the membrane. Its function is as follows. Essential subunit of the gamma-secretase complex, an endoprotease complex that catalyzes the intramembrane cleavage of integral membrane proteins such as Notch receptors and APP (amyloid-beta precursor protein). The gamma-secretase complex plays a role in Notch and Wnt signaling cascades and regulation of downstream processes via its role in processing key regulatory proteins. In Danio rerio (Zebrafish), this protein is Gamma-secretase subunit PEN-2 (psenen).